Consider the following 423-residue polypeptide: Hemoglobinase (423 aa).

The N-terminal stretch at 1-18 is a signal peptide; sequence MFYSIFFIHILRIVLVDC. A propeptide spanning residues 19–29 is cleaved from the precursor; it reads NEYSEENVDDR. Active-site residues include His-145 and Cys-186. Residues 286-307 are disordered; it reads RKKASTEHDEPPMKPKDSIPSR. Positions 286 to 423 are excised as a propeptide; it reads RKKASTEHDE…INGVIRKVCG (138 aa). The segment covering 289-305 has biased composition (basic and acidic residues); that stretch reads ASTEHDEPPMKPKDSIP.

Belongs to the peptidase C13 family. In terms of tissue distribution, gut.

It carries out the reaction Hydrolysis of proteins and small molecule substrates at -Asn-|-Xaa- bonds.. Functionally, this protease is used by the parasite for degradation of the host globin. In Schistosoma japonicum (Blood fluke), this protein is Hemoglobinase (HAEM).